The sequence spans 1092 residues: Isoleucine--tRNA ligase (1092 aa).

The 'HIGH' region signature appears at Pro53–His63. The short motif at Lys613–Arg617 is the 'KMSKS' region element. Lys616 provides a ligand contact to ATP.

This sequence belongs to the class-I aminoacyl-tRNA synthetase family. IleS type 2 subfamily. Monomer. Zn(2+) serves as cofactor.

The protein localises to the cytoplasm. The enzyme catalyses tRNA(Ile) + L-isoleucine + ATP = L-isoleucyl-tRNA(Ile) + AMP + diphosphate. Its function is as follows. Catalyzes the attachment of isoleucine to tRNA(Ile). As IleRS can inadvertently accommodate and process structurally similar amino acids such as valine, to avoid such errors it has two additional distinct tRNA(Ile)-dependent editing activities. One activity is designated as 'pretransfer' editing and involves the hydrolysis of activated Val-AMP. The other activity is designated 'posttransfer' editing and involves deacylation of mischarged Val-tRNA(Ile). The polypeptide is Isoleucine--tRNA ligase (Rickettsia peacockii (strain Rustic)).